Here is a 235-residue protein sequence, read N- to C-terminus: MTDHDNQRWLQLWRERRTDFHQHGVNLLLSRFWPAFAPATPSRVFVPLCGKSLDMLWLAEQGHDVIGVELSPLAIEAFFRENHLPPSKRRQGRFTLWRHGRIGILCGDYFALSEADLGPVDSVYDRAALTALPPILRSRYVAQLRRIVPDTARVFLLTLEDAEADATLQQALGVDEELAALYTAGFEIALAHVESLFEPDPQNGAPRRVEHKVYQLTGKRPASPEADGRAAETED.

S-adenosyl-L-methionine contacts are provided by W13, L48, E69, and R126. Positions P199–D235 are disordered. Residues A226–D235 are compositionally biased toward basic and acidic residues.

It belongs to the class I-like SAM-binding methyltransferase superfamily. TPMT family.

It localises to the cytoplasm. It carries out the reaction S-adenosyl-L-methionine + a thiopurine = S-adenosyl-L-homocysteine + a thiopurine S-methylether.. The chain is Thiopurine S-methyltransferase from Stutzerimonas stutzeri (strain A1501) (Pseudomonas stutzeri).